A 418-amino-acid polypeptide reads, in one-letter code: Putative ion-transport protein YfeO (418 aa).

Transmembrane regions (helical) follow at residues 10–30 (LLLSLPAVAIGIASSLILIVV), 54–74 (DSPLWIIGVLTLTGIAVGLVI), 99–119 (ALPGLIVALILGLAGGVSLGP), 120–140 (EHPIMTVNIALAVAIGARLLP), 149–169 (ILASAGTIGALFGTPVAAALI), 186–206 (LFAPLMAAAAGALTTGLFFHP), 223–243 (ILSGAIVAAIAIAAGMVAVWC), 258–278 (VLVLGIGGFILGILGVIGGPV), 300–320 (DYFLLAVIKLAALVVAAASGF), 322–342 (GGRIFPAVFVGVALGLMLHEH), 343–363 (VPAVPAAITVSCAILGIVLVV), and 371–391 (LFMAAVVVPNTTLLPLLCIVM).

The protein belongs to the chloride channel (TC 2.A.49) family.

The protein resides in the cell membrane. The protein is Putative ion-transport protein YfeO of Escherichia coli O9:H4 (strain HS).